The primary structure comprises 360 residues: Peptide chain release factor 1 (360 aa).

Q236 bears the N5-methylglutamine mark. A disordered region spans residues 288–308 (QDEQDAERKSTIGTGDRSERI). Over residues 293-308 (AERKSTIGTGDRSERI) the composition is skewed to basic and acidic residues.

This sequence belongs to the prokaryotic/mitochondrial release factor family. Post-translationally, methylated by PrmC. Methylation increases the termination efficiency of RF1.

Its subcellular location is the cytoplasm. Peptide chain release factor 1 directs the termination of translation in response to the peptide chain termination codons UAG and UAA. This chain is Peptide chain release factor 1, found in Streptococcus equi subsp. equi (strain 4047).